A 270-amino-acid chain; its full sequence is Diaminopimelate epimerase (270 aa).

Substrate is bound by residues asparagine 15, glutamine 49, and asparagine 66. Cysteine 75 serves as the catalytic Proton donor. Substrate-binding positions include 76-77 (GN), asparagine 155, asparagine 187, and 204-205 (ER). Cysteine 213 acts as the Proton acceptor in catalysis. Position 214-215 (214-215 (GS)) interacts with substrate.

The protein belongs to the diaminopimelate epimerase family. In terms of assembly, homodimer.

It localises to the cytoplasm. The enzyme catalyses (2S,6S)-2,6-diaminopimelate = meso-2,6-diaminopimelate. It functions in the pathway amino-acid biosynthesis; L-lysine biosynthesis via DAP pathway; DL-2,6-diaminopimelate from LL-2,6-diaminopimelate: step 1/1. Its function is as follows. Catalyzes the stereoinversion of LL-2,6-diaminopimelate (L,L-DAP) to meso-diaminopimelate (meso-DAP), a precursor of L-lysine and an essential component of the bacterial peptidoglycan. This Rickettsia prowazekii (strain Madrid E) protein is Diaminopimelate epimerase.